Consider the following 465-residue polypeptide: Chromosomal replication initiator protein DnaA (465 aa).

The tract at residues 1–87 is domain I, interacts with DnaA modulators; that stretch reads MLWTDCLTRL…RPGSILSSSE (87 aa). Residues 81–123 are disordered; the sequence is SILSSSEQPATTTAALQTAPIPQPAKGKREPEPVANTAVSSKS. Low complexity predominate over residues 88–100; that stretch reads QPATTTAALQTAP. The domain II stretch occupies residues 88-127; that stretch reads QPATTTAALQTAPIPQPAKGKREPEPVANTAVSSKSSKKK. Residues 128–345 are domain III, AAA+ region; it reads LLNPQFTFSL…GALNKVVAIS (218 aa). The ATP site is built by Gly173, Gly175, Lys176, and Thr177. The interval 346–465 is domain IV, binds dsDNA; it reads RFKGAPIDLD…YKNLLRLLQS (120 aa).

Belongs to the DnaA family. In terms of assembly, oligomerizes as a right-handed, spiral filament on DNA at oriC.

Its subcellular location is the cytoplasm. Plays an essential role in the initiation and regulation of chromosomal replication. ATP-DnaA binds to the origin of replication (oriC) to initiate formation of the DNA replication initiation complex once per cell cycle. Binds the DnaA box (a 9 base pair repeat at the origin) and separates the double-stranded (ds)DNA. Forms a right-handed helical filament on oriC DNA; dsDNA binds to the exterior of the filament while single-stranded (ss)DNA is stabiized in the filament's interior. The ATP-DnaA-oriC complex binds and stabilizes one strand of the AT-rich DNA unwinding element (DUE), permitting loading of DNA polymerase. After initiation quickly degrades to an ADP-DnaA complex that is not apt for DNA replication. Binds acidic phospholipids. The protein is Chromosomal replication initiator protein DnaA of Acinetobacter baumannii (strain SDF).